The following is a 947-amino-acid chain: Nonribosomal peptide synthetase ucdA (947 aa).

Residues 25-413 (YSPHANAGYC…AGPVVFKEYF (389 aa)) form an adenylation (A) domain region. A Carrier domain is found at 585 to 665 (APENEFERDL…DLGTALRKLQ (81 aa)). Ser-623 bears the O-(pantetheine 4'-phosphoryl)serine mark. The interval 684-934 (PLWLVHPGVG…MLSPEHVFDF (251 aa)) is thioesterase (TE) domain.

This sequence belongs to the NRP synthetase family.

The catalysed reaction is 2 3-(4-hydroxyphenyl)pyruvate + 2 ATP = atromentin + 2 AMP + 2 diphosphate + H(+). Its pathway is secondary metabolite biosynthesis. Its function is as follows. Nonribosomal peptide synthetase that mediates the biosynthesis of usterphenyllins and uscandidusins, p-terphenyl derivatives. Within the pathway, ucdA condenses two 4-hydroxyphenylpyruvate (HPPA) units to produce atromentin. UcdA first activates HPPA through its A domain to AMP-HPPA. The HPPA unit is then loaded to the T domain and eventually transferred to the TE domain. Another HPPA unit is then loaded onto the T domain. The TE domain then catalyzes the condensation of the two HPPA units and the release of atromentin via cyclization. The pathway begin with the biosynthesis of 4-hydroxyphenylpyruvate (HPPA) from L-tyrosine, possibly by the aminotransferase ucdG. The nonribosomal peptide synthetase ucdA then condenses two HPPA units to produce atromentin. The key step in this pathway is the reduction and dehydration of atromentin to form a terphenyl triol intermediate, performed by the NAD-dependent dehydrogenase ucdB. Further O-methylation by the methyltransferase ucdC forms terphenyllin carrying two methoxy moieties at C-9 and C-12, and subsequent dihydroxylation at C-3 of ring A and C-15 of ring C by the flavin-dependent oxygenase ucdD leads to 3,15-dihydroxyterphenyllin. Prenylation by ucdE at position C-5 of ring A forms usterphenyllin B, and is followed by a second prenylation at position C-14 of ring C to form usterphenyllin A. The following furan ring formation that leads to uscandidusins A and B was proven to be an unexpected spontaneous non-enzymatic reaction. The protein is Nonribosomal peptide synthetase ucdA of Aspergillus ustus.